The primary structure comprises 203 residues: Large ribosomal subunit protein uL6 (203 aa).

This sequence belongs to the universal ribosomal protein uL6 family. As to quaternary structure, part of the 50S ribosomal subunit.

Its function is as follows. This protein binds to the 23S rRNA, and is important in its secondary structure. It is located near the subunit interface in the base of the L7/L12 stalk, and near the tRNA binding site of the peptidyltransferase center. In Hyphomonas neptunium (strain ATCC 15444), this protein is Large ribosomal subunit protein uL6.